A 249-amino-acid polypeptide reads, in one-letter code: tRNA (guanine-N(1)-)-methyltransferase (249 aa).

S-adenosyl-L-methionine contacts are provided by residues G113 and 132-137 (VGDFVV).

The protein belongs to the RNA methyltransferase TrmD family. In terms of assembly, homodimer.

The protein resides in the cytoplasm. The catalysed reaction is guanosine(37) in tRNA + S-adenosyl-L-methionine = N(1)-methylguanosine(37) in tRNA + S-adenosyl-L-homocysteine + H(+). In terms of biological role, specifically methylates guanosine-37 in various tRNAs. This chain is tRNA (guanine-N(1)-)-methyltransferase, found in Desulforudis audaxviator (strain MP104C).